A 400-amino-acid chain; its full sequence is Enoyl-[acyl-carrier-protein] reductase [NADH] (400 aa).

NAD(+) is bound by residues 48-53 (GASTGY), 74-75 (FE), 111-112 (DA), and 139-140 (LA). Residue Tyr225 coordinates substrate. The active-site Proton donor is Tyr235. Residues Lys244 and 273–275 (VVT) contribute to the NAD(+) site.

It belongs to the TER reductase family. Monomer.

It carries out the reaction a 2,3-saturated acyl-[ACP] + NAD(+) = a (2E)-enoyl-[ACP] + NADH + H(+). Its pathway is lipid metabolism; fatty acid biosynthesis. Its function is as follows. Involved in the final reduction of the elongation cycle of fatty acid synthesis (FAS II). Catalyzes the reduction of a carbon-carbon double bond in an enoyl moiety that is covalently linked to an acyl carrier protein (ACP). The protein is Enoyl-[acyl-carrier-protein] reductase [NADH] of Burkholderia cenocepacia (strain ATCC BAA-245 / DSM 16553 / LMG 16656 / NCTC 13227 / J2315 / CF5610) (Burkholderia cepacia (strain J2315)).